Reading from the N-terminus, the 391-residue chain is S-adenosylmethionine synthase (391 aa).

A disordered region spans residues methionine 1–lysine 20. Residue histidine 17 participates in ATP binding. Position 19 (aspartate 19) interacts with Mg(2+). Glutamate 45 provides a ligand contact to K(+). L-methionine-binding residues include glutamate 58 and glutamine 102. The tract at residues glutamine 102–alanine 112 is flexible loop. ATP is bound by residues aspartate 169–lysine 171, lysine 235–phenylalanine 236, aspartate 244, arginine 250–lysine 251, alanine 267, and lysine 271. Position 244 (aspartate 244) interacts with L-methionine. Residue lysine 275 participates in L-methionine binding.

Belongs to the AdoMet synthase family. As to quaternary structure, homotetramer; dimer of dimers. Mg(2+) is required as a cofactor. It depends on K(+) as a cofactor.

It is found in the cytoplasm. It catalyses the reaction L-methionine + ATP + H2O = S-adenosyl-L-methionine + phosphate + diphosphate. The protein operates within amino-acid biosynthesis; S-adenosyl-L-methionine biosynthesis; S-adenosyl-L-methionine from L-methionine: step 1/1. Its function is as follows. Catalyzes the formation of S-adenosylmethionine (AdoMet) from methionine and ATP. The overall synthetic reaction is composed of two sequential steps, AdoMet formation and the subsequent tripolyphosphate hydrolysis which occurs prior to release of AdoMet from the enzyme. The polypeptide is S-adenosylmethionine synthase (Methylorubrum populi (strain ATCC BAA-705 / NCIMB 13946 / BJ001) (Methylobacterium populi)).